Here is a 165-residue protein sequence, read N- to C-terminus: Thiol peroxidase (165 aa).

Residues Pro-18–Leu-165 enclose the Thioredoxin domain. The active-site Cysteine sulfenic acid (-SOH) intermediate is the Cys-60. A disulfide bond links Cys-60 and Cys-94.

The protein belongs to the peroxiredoxin family. Tpx subfamily. In terms of assembly, homodimer.

The catalysed reaction is a hydroperoxide + [thioredoxin]-dithiol = an alcohol + [thioredoxin]-disulfide + H2O. In terms of biological role, thiol-specific peroxidase that catalyzes the reduction of hydrogen peroxide and organic hydroperoxides to water and alcohols, respectively. Plays a role in cell protection against oxidative stress by detoxifying peroxides. In Pseudomonas aeruginosa (strain ATCC 15692 / DSM 22644 / CIP 104116 / JCM 14847 / LMG 12228 / 1C / PRS 101 / PAO1), this protein is Thiol peroxidase.